The sequence spans 257 residues: Undecaprenyl-diphosphatase (257 aa).

Transmembrane regions (helical) follow at residues 4–24, 51–71, 78–98, 106–126, 133–153, 171–191, 207–227, and 235–255; these read LFKA…PISS, HVGT…NIFF, LFII…HDLI, LIIV…EKVG, ITLS…IPGV, AYAA…AAML, LFII…KFLL, and LNLF…LYFF.

It belongs to the UppP family.

The protein resides in the cell inner membrane. The enzyme catalyses di-trans,octa-cis-undecaprenyl diphosphate + H2O = di-trans,octa-cis-undecaprenyl phosphate + phosphate + H(+). Functionally, catalyzes the dephosphorylation of undecaprenyl diphosphate (UPP). Confers resistance to bacitracin. The polypeptide is Undecaprenyl-diphosphatase (Thermodesulfovibrio yellowstonii (strain ATCC 51303 / DSM 11347 / YP87)).